The primary structure comprises 313 residues: MASNVTNKTDPRSMNSRVFIGNLNTLVVKKSDVEAIFSKYGKIVGCSVHKGFAFVQYVNERNARAAVAGEDGRMIAGQVLDINLAAEPKVNRGKAGVKRSAAEMYGSVPEHPSPSPLLSSSFDLDYDFQRDYYDRMYSYPARVPPPPPIARAVVPSKRQRVSGNTSRRGKSGFNSKSGQRGSSSKSGKLKGDDLQAIKKELTQIKQKVDSLLESLEKIEKEQSKQADLSFSSPVEMKNEKSEEEQSSASVKKDETNVKMESEAGADDSAEEGDLLDDDDNEDRGDDQLELKDDEKEPEEGEDDRDSANGEDDS.

Alanine 2 bears the N-acetylalanine mark. Residues lysine 8, lysine 50, lysine 89, and lysine 94 each participate in a glycyl lysine isopeptide (Lys-Gly) (interchain with G-Cter in SUMO2) cross-link. Residues 16–87 (SRVFIGNLNT…QVLDINLAAE (72 aa)) form the RRM domain. Phosphoserine occurs at positions 113, 115, and 121. Disordered stretches follow at residues 139–191 (YPAR…KLKG) and 219–313 (EKEQ…EDDS). The short motif at 155–161 (PSKRQRV) is the Nuclear localization signal element. A phosphoserine mark is found at serine 162 and serine 166. Positions 175–186 (SKSGQRGSSSKS) are enriched in low complexity. Position 176 is an N6-acetyllysine; alternate (lysine 176). A Glycyl lysine isopeptide (Lys-Gly) (interchain with G-Cter in SUMO2); alternate cross-link involves residue lysine 176. Positions 191–226 (GDDLQAIKKELTQIKQKVDSLLESLEKIEKEQSKQA) form a coiled coil. Residue lysine 224 forms a Glycyl lysine isopeptide (Lys-Gly) (interchain with G-Cter in SUMO2) linkage. Phosphoserine is present on residues serine 229, serine 231, and serine 232. Lysine 237 participates in a covalent cross-link: Glycyl lysine isopeptide (Lys-Gly) (interchain with G-Cter in SUMO2). Residue lysine 240 forms a Glycyl lysine isopeptide (Lys-Gly) (interchain with G-Cter in SUMO2); alternate linkage. Lysine 240 is covalently cross-linked (Glycyl lysine isopeptide (Lys-Gly) (interchain with G-Cter in SUMO1); alternate). A phosphoserine mark is found at serine 241, serine 246, serine 247, and serine 249. Basic and acidic residues predominate over residues 250–261 (VKKDETNVKMES). Residues lysine 251 and lysine 252 each participate in a glycyl lysine isopeptide (Lys-Gly) (interchain with G-Cter in SUMO2) cross-link. A Glycyl lysine isopeptide (Lys-Gly) (interchain with G-Cter in SUMO2); alternate cross-link involves residue lysine 258. Lysine 258 participates in a covalent cross-link: Glycyl lysine isopeptide (Lys-Gly) (interchain with G-Cter in SUMO); alternate. 2 positions are modified to phosphoserine: serine 261 and serine 268. The span at 263–284 (AGADDSAEEGDLLDDDDNEDRG) shows a compositional bias: acidic residues. The segment covering 285–294 (DDQLELKDDE) has biased composition (basic and acidic residues). Residues 295 to 313 (KEPEEGEDDRDSANGEDDS) are compositionally biased toward acidic residues. A phosphoserine mark is found at serine 306 and serine 313.

Belongs to the RRM HNRPC family. RALY subfamily. Tetramer composed of 3 copies of isoform C1 and 1 copy of isoform C2. Assembly of 3 tetramers with bound pre-mRNA gives rise to a 19S complex that interacts with HNRNPA2B1 tetramers. Component of the 40S hnRNP particle. Identified in the spliceosome C complex. Interacts with IGF2BP1. Interacts with DHX9; this interaction is direct, enhanced probably by their concomitant binding to RNA and mediates the attachment to actin filaments. Interacts with PPIA/CYPA. Phosphorylated on Ser-268 and Ser-306 in resting cells. Post-translationally, sumoylated. Sumoylation reduces affinity for mRNA. In terms of processing, ubiquitinated and degraded after nucleo-cytoplasmic transport by YWHAE.

The protein resides in the nucleus. Binds pre-mRNA and nucleates the assembly of 40S hnRNP particles. Interacts with poly-U tracts in the 3'-UTR or 5'-UTR of mRNA and modulates the stability and the level of translation of bound mRNA molecules. Single HNRNPC tetramers bind 230-240 nucleotides. Trimers of HNRNPC tetramers bind 700 nucleotides. May play a role in the early steps of spliceosome assembly and pre-mRNA splicing. N6-methyladenosine (m6A) has been shown to alter the local structure in mRNAs and long non-coding RNAs (lncRNAs) via a mechanism named 'm(6)A-switch', facilitating binding of HNRNPC, leading to regulation of mRNA splicing. The polypeptide is Heterogeneous nuclear ribonucleoproteins C1/C2 (Hnrnpc) (Mus musculus (Mouse)).